A 215-amino-acid chain; its full sequence is MHLTAEILAARRGEDLIFVNISFHLAAGEALVLTGKNGSGKSTLLRVVAGLLRPEKGTVIFHDEESPGGRHAGEVSHYLGHRNAMKNELTVAENLDFWRAFLGNTGSAAALSVEDATDAVGLSGITHLPFGYLSAGQQRRIAFAKLLVAHRPVWILDEPTAALDASADRLFADLIEAHLEKGGIVLAATHQPLGLRNSQELKMTGFAGVDNGVWG.

The region spanning 3 to 211 is the ABC transporter domain; that stretch reads LTAEILAARR…KMTGFAGVDN (209 aa). 35–42 is a binding site for ATP; the sequence is GKNGSGKS.

The protein belongs to the ABC transporter superfamily. CcmA exporter (TC 3.A.1.107) family. The complex is composed of two ATP-binding proteins (CcmA) and two transmembrane proteins (CcmB).

It is found in the cell inner membrane. It catalyses the reaction heme b(in) + ATP + H2O = heme b(out) + ADP + phosphate + H(+). Its function is as follows. Part of the ABC transporter complex CcmAB involved in the biogenesis of c-type cytochromes; once thought to export heme, this seems not to be the case, but its exact role is uncertain. Responsible for energy coupling to the transport system. In Rhizobium johnstonii (strain DSM 114642 / LMG 32736 / 3841) (Rhizobium leguminosarum bv. viciae), this protein is Cytochrome c biogenesis ATP-binding export protein CcmA.